The chain runs to 95 residues: Small ribosomal subunit protein uS19 (95 aa).

Positions 73–95 (EFSPTRSYRGHGADKNAKGSKKK) are disordered.

The protein belongs to the universal ribosomal protein uS19 family.

Protein S19 forms a complex with S13 that binds strongly to the 16S ribosomal RNA. This is Small ribosomal subunit protein uS19 from Deinococcus deserti (strain DSM 17065 / CIP 109153 / LMG 22923 / VCD115).